We begin with the raw amino-acid sequence, 108 residues long: Thiosulfate sulfurtransferase GlpE (108 aa).

Positions 17-105 constitute a Rhodanese domain; sequence QEKEAVLVDI…WQRQFPAEVA (89 aa). Cys65 functions as the Cysteine persulfide intermediate in the catalytic mechanism.

The protein belongs to the GlpE family.

The protein localises to the cytoplasm. It catalyses the reaction thiosulfate + hydrogen cyanide = thiocyanate + sulfite + 2 H(+). It carries out the reaction thiosulfate + [thioredoxin]-dithiol = [thioredoxin]-disulfide + hydrogen sulfide + sulfite + 2 H(+). Transferase that catalyzes the transfer of sulfur from thiosulfate to thiophilic acceptors such as cyanide or dithiols. May function in a CysM-independent thiosulfate assimilation pathway by catalyzing the conversion of thiosulfate to sulfite, which can then be used for L-cysteine biosynthesis. This chain is Thiosulfate sulfurtransferase GlpE, found in Escherichia coli O139:H28 (strain E24377A / ETEC).